The primary structure comprises 638 residues: Threonine--tRNA ligase (638 aa).

One can recognise a TGS domain in the interval 1-61; that stretch reads MPNIKLPDGS…ERDSELAILT (61 aa). Residues 242 to 533 are catalytic; the sequence is DHRKLGRQLD…LIEHYAGAMP (292 aa). Residues Cys-333, His-384, and His-510 each contribute to the Zn(2+) site.

This sequence belongs to the class-II aminoacyl-tRNA synthetase family. As to quaternary structure, homodimer. The cofactor is Zn(2+).

The protein localises to the cytoplasm. It catalyses the reaction tRNA(Thr) + L-threonine + ATP = L-threonyl-tRNA(Thr) + AMP + diphosphate + H(+). In terms of biological role, catalyzes the attachment of threonine to tRNA(Thr) in a two-step reaction: L-threonine is first activated by ATP to form Thr-AMP and then transferred to the acceptor end of tRNA(Thr). Also edits incorrectly charged L-seryl-tRNA(Thr). This is Threonine--tRNA ligase from Azoarcus sp. (strain BH72).